We begin with the raw amino-acid sequence, 341 residues long: Mitochondrial ubiquitin ligase activator of nfkb 1-A (341 aa).

The Cytoplasmic portion of the chain corresponds to 1 to 5 (MEDFP). Residues 6-26 (VLEMVCLGSSVALSGLFYYIY) traverse the membrane as a helical segment. Topologically, residues 27–233 (RKKRKTVDKL…LLMEQEGQAE (207 aa)) are mitochondrial intermembrane. Residues 234 to 254 (VWRVFACICALAGVAVLIWTG) form a helical membrane-spanning segment. Residues 255–341 (RRYYRQLKLR…IKRVVPLYQA (87 aa)) lie on the Cytoplasmic side of the membrane. Residues 292–329 (CVICLSNPRGCVLLDCGHVCCCFRCYQALPQPFCPICR) form an RING-type zinc finger.

As to quaternary structure, homooligomer.

Its subcellular location is the mitochondrion outer membrane. It catalyses the reaction S-ubiquitinyl-[E2 ubiquitin-conjugating enzyme]-L-cysteine + [acceptor protein]-L-lysine = [E2 ubiquitin-conjugating enzyme]-L-cysteine + N(6)-ubiquitinyl-[acceptor protein]-L-lysine.. It participates in protein modification; protein ubiquitination. Its function is as follows. E3 ubiquitin-protein ligase that plays a role in the control of mitochondrial morphology. Promotes mitochondrial fragmentation and influences mitochondrial localization. Inhibits cell growth. E3 ubiquitin ligases accept ubiquitin from an E2 ubiquitin-conjugating enzyme in the form of a thioester and then directly transfer the ubiquitin to targeted substrates. This is Mitochondrial ubiquitin ligase activator of nfkb 1-A (mul1a) from Danio rerio (Zebrafish).